Consider the following 148-residue polypeptide: Transcription antitermination protein NusB (148 aa).

It belongs to the NusB family.

Functionally, involved in transcription antitermination. Required for transcription of ribosomal RNA (rRNA) genes. Binds specifically to the boxA antiterminator sequence of the ribosomal RNA (rrn) operons. This Nitrosococcus oceani (strain ATCC 19707 / BCRC 17464 / JCM 30415 / NCIMB 11848 / C-107) protein is Transcription antitermination protein NusB.